A 175-amino-acid chain; its full sequence is ATP-dependent protease subunit HslV (175 aa).

Thr2 is an active-site residue. Gly158, Cys161, and Thr164 together coordinate Na(+).

It belongs to the peptidase T1B family. HslV subfamily. As to quaternary structure, a double ring-shaped homohexamer of HslV is capped on each side by a ring-shaped HslU homohexamer. The assembly of the HslU/HslV complex is dependent on binding of ATP.

It is found in the cytoplasm. The enzyme catalyses ATP-dependent cleavage of peptide bonds with broad specificity.. With respect to regulation, allosterically activated by HslU binding. In terms of biological role, protease subunit of a proteasome-like degradation complex believed to be a general protein degrading machinery. This chain is ATP-dependent protease subunit HslV, found in Haemophilus influenzae (strain PittEE).